We begin with the raw amino-acid sequence, 594 residues long: Glomulin (594 aa).

Ala2 is modified (N-acetylalanine). An alpha-helical region with structural similarity to HEAT repeats region spans residues Ala2 to Met553. Residues Ile300–Lys594 form an important for interaction with RBX1 region.

As to quaternary structure, interacts with FKBP4 and FKBP1A. Isoform 1: Interacts with RBX1 (via RING domain). Identified in complexes that contain RBX1 plus one of the cullins CUL1, CUL2, CUL3, and CUL4A. Identified in a SCF complex composed of CUL1, RBX1, SKP1, FBXW7 and GLMN. Component of a SCF-like complex consisting of CUL7, RBX1, SKP1, FBXW8 and GLMN. Interacts with unphosphorylated MET and is released upon MET phosphorylation. Post-translationally, phosphorylated on tyrosine residues. Ubiquitous.

In terms of biological role, regulatory component of cullin-RING-based SCF (SKP1-Cullin-F-box protein) E3 ubiquitin-protein ligase complexes. Inhibits E3 ubiquitin ligase activity by binding to RBX1 (via RING domain) and inhibiting its interaction with the E2 ubiquitin-conjugating enzyme CDC34. Inhibits RBX1-mediated neddylation of CUL1. Required for normal stability and normal cellular levels of key components of SCF ubiquitin ligase complexes, including FBXW7, RBX1, CUL1, CUL2, CUL3, CUL4A, and thereby contributes to the regulation of CCNE1 and MYC levels. Essential for normal development of the vasculature. Contributes to the regulation of RPS6KB1 phosphorylation. The chain is Glomulin (GLMN) from Homo sapiens (Human).